Reading from the N-terminus, the 121-residue chain is Natriuretic peptides B (121 aa).

The signal sequence occupies residues M1–S26. A disulfide bridge connects residues C99 and C115.

This sequence belongs to the natriuretic peptide family. The precursor molecule is proteolytically cleaved by the endoprotease Furin to produce brain natriuretic peptide 45. May undergo further proteolytic cleavage by various proteases such as DPP4, MME and possibly FAP, to give rise to a variety of shorter peptides. May be cleaved at Ser-91 by the prolyl endopeptidase FAP (seprase) activity (in vitro). May be degraded by IDE. During IDE degradation, the resulting products initially increase the activation of NPR1 and can also stimulate NPR2 to produce cGMP before the fragments are completely degraded and inactivated by IDE (in vitro). In terms of tissue distribution, expressed in the atria and ventricles, but at much lower levels than NPPA. Expression levels in the ventricles are slightly higher than in the atria. Very low levels of expression detected in the brain, hypothalamus, lung and aorta. Atria (at protein level). Cardiocytes (at protein level).

Its subcellular location is the secreted. In terms of biological role, cardiac hormone that plays a key role in mediating cardio-renal homeostasis. May also function as a paracrine antifibrotic factor in the heart. Acts by specifically binding and stimulating NPR1 to produce cGMP, which in turn activates effector proteins that drive various biological responses. Likely involved in regulating the extracellular fluid volume and maintaining the fluid-electrolyte balance through natriuresis, diuresis, kaluresis and chloruresis. This Rattus norvegicus (Rat) protein is Natriuretic peptides B (Nppb).